A 433-amino-acid chain; its full sequence is Pyrimidine-nucleoside phosphorylase (433 aa).

Residue 81–83 (KHS) participates in phosphate binding. K(+) contacts are provided by Gly-88 and Thr-90. Residues Thr-92, 108 to 110 (KMS), and Thr-120 contribute to the phosphate site. The substrate site is built by Arg-168 and Lys-187. K(+) contacts are provided by Leu-243, Ala-246, and Glu-255.

Belongs to the thymidine/pyrimidine-nucleoside phosphorylase family. Homodimer. Requires K(+) as cofactor.

The enzyme catalyses uridine + phosphate = alpha-D-ribose 1-phosphate + uracil. It carries out the reaction thymidine + phosphate = 2-deoxy-alpha-D-ribose 1-phosphate + thymine. The catalysed reaction is 2'-deoxyuridine + phosphate = 2-deoxy-alpha-D-ribose 1-phosphate + uracil. In terms of biological role, catalyzes phosphorolysis of the pyrimidine nucleosides uridine, thymidine and 2'-deoxyuridine with the formation of the corresponding pyrimidine base and ribose-1-phosphate. The polypeptide is Pyrimidine-nucleoside phosphorylase (pdp) (Staphylococcus aureus (strain NCTC 8325 / PS 47)).